Reading from the N-terminus, the 74-residue chain is Antimicrobial peptide HsAp1 (74 aa).

Residues 1–21 (MSRRVILTLVLVTILVKTMAG) form the signal peptide. A propeptide spanning residues 22-33 (MESKKVETTDEI) is cleaved from the precursor. A Proline amide modification is found at Pro65. The propeptide occupies 69-74 (AISEQT).

This sequence belongs to the non-disulfide-bridged peptide (NDBP) superfamily. Medium-length antimicrobial peptide (group 3) family. As to expression, expressed by the venom gland.

It localises to the secreted. The protein resides in the target cell membrane. In terms of biological role, possesses antimicrobial activity against both Gram-negative (MIC=23.8-51.2 uM) and Gram-positive (MIC=11.8-46.5 uM) bacteria, as well as against the fungus C.tropicalis (MIC=48.6 uM). Also possesses a relatively high hemolytic activity. May act by disrupting the integrity of the bacterial cell membrane. The polypeptide is Antimicrobial peptide HsAp1 (Heterometrus spinifer (Asia giant forest scorpion)).